The primary structure comprises 245 residues: 23S rRNA (guanosine-2'-O-)-methyltransferase RlmB (245 aa).

S-adenosyl-L-methionine-binding residues include Gly197, Ile217, and Leu226.

It belongs to the class IV-like SAM-binding methyltransferase superfamily. RNA methyltransferase TrmH family. RlmB subfamily.

It localises to the cytoplasm. It catalyses the reaction guanosine(2251) in 23S rRNA + S-adenosyl-L-methionine = 2'-O-methylguanosine(2251) in 23S rRNA + S-adenosyl-L-homocysteine + H(+). In terms of biological role, specifically methylates the ribose of guanosine 2251 in 23S rRNA. This is 23S rRNA (guanosine-2'-O-)-methyltransferase RlmB from Photobacterium profundum (strain SS9).